Reading from the N-terminus, the 223-residue chain is uncharacterized protein (223 aa).

Helical transmembrane passes span 1 to 21 and 45 to 65; these read MLIIGLCVVSMLLLSSNTFYL and ILIGFVLALIGFIFCSGTSLI.

Its subcellular location is the cell membrane. This is an uncharacterized protein from Haemophilus influenzae (strain ATCC 51907 / DSM 11121 / KW20 / Rd).